The following is a 109-amino-acid chain: Nucleoid-associated protein BUsg_467 (109 aa).

It belongs to the YbaB/EbfC family. In terms of assembly, homodimer.

The protein localises to the cytoplasm. Its subcellular location is the nucleoid. Its function is as follows. Binds to DNA and alters its conformation. May be involved in regulation of gene expression, nucleoid organization and DNA protection. In Buchnera aphidicola subsp. Schizaphis graminum (strain Sg), this protein is Nucleoid-associated protein BUsg_467.